Consider the following 271-residue polypeptide: Acetyl-coenzyme A carboxylase carboxyl transferase subunit beta (271 aa).

Positions leucine 21–alanine 271 constitute a CoA carboxyltransferase N-terminal domain. 4 residues coordinate Zn(2+): cysteine 25, cysteine 28, cysteine 43, and cysteine 46. The C4-type zinc-finger motif lies at cysteine 25–cysteine 46.

The protein belongs to the AccD/PCCB family. Acetyl-CoA carboxylase is a heterohexamer composed of biotin carboxyl carrier protein (AccB), biotin carboxylase (AccC) and two subunits each of ACCase subunit alpha (AccA) and ACCase subunit beta (AccD). Requires Zn(2+) as cofactor.

The protein resides in the cytoplasm. The catalysed reaction is N(6)-carboxybiotinyl-L-lysyl-[protein] + acetyl-CoA = N(6)-biotinyl-L-lysyl-[protein] + malonyl-CoA. The protein operates within lipid metabolism; malonyl-CoA biosynthesis; malonyl-CoA from acetyl-CoA: step 1/1. Functionally, component of the acetyl coenzyme A carboxylase (ACC) complex. Biotin carboxylase (BC) catalyzes the carboxylation of biotin on its carrier protein (BCCP) and then the CO(2) group is transferred by the transcarboxylase to acetyl-CoA to form malonyl-CoA. This is Acetyl-coenzyme A carboxylase carboxyl transferase subunit beta from Lacticaseibacillus paracasei (strain ATCC 334 / BCRC 17002 / CCUG 31169 / CIP 107868 / KCTC 3260 / NRRL B-441) (Lactobacillus paracasei).